Consider the following 100-residue polypeptide: SAGA-associated factor 11 (100 aa).

The SGF11-type zinc-finger motif lies at 73–94; it reads FQCENCGRSIAGGRFAQHMTKC.

It belongs to the SGF11 family. In terms of assembly, component of the 1.8 MDa SAGA transcription coactivator-HAT complex. SAGA is built of 5 distinct domains with specialized functions. Within the SAGA complex, SUS1, SGF11, SGF73 and UBP8 form an additional subcomplex of SAGA called the DUB module (deubiquitination module). Interacts directly with SGF73, SUS1 and UBP8.

The protein localises to the nucleus. In terms of biological role, functions as a component of the transcription regulatory histone acetylation (HAT) complex SAGA. At the promoters, SAGA is required for recruitment of the basal transcription machinery. It influences RNA polymerase II transcriptional activity through different activities such as TBP interaction and promoter selectivity, interaction with transcription activators, and chromatin modification through histone acetylation and deubiquitination. SAGA acetylates nucleosomal histone H3 to some extent (to form H3K9ac, H3K14ac, H3K18ac and H3K23ac). SAGA interacts with DNA via upstream activating sequences (UASs). Involved in transcriptional regulation of a subset of SAGA-regulated genes. Within the SAGA complex, participates in a subcomplex, that specifically deubiquitinates histones H2B. The polypeptide is SAGA-associated factor 11 (Debaryomyces hansenii (strain ATCC 36239 / CBS 767 / BCRC 21394 / JCM 1990 / NBRC 0083 / IGC 2968) (Yeast)).